Here is a 1612-residue protein sequence, read N- to C-terminus: MAYTQQATNAALASTLRGNNPLVNDLANRRLYESAVEQCNAHDRRPKVNFLRSISEEQTLIATKAYPEFQITFYNTQNAVHSLAGGLRSLELEYLMMQIPYGSTTYDIGGNFAAHMFKGRDYVHCCMPNMDLRDVMRHNAQKDSIELYLSKLAQKKKVIPPYQKPCFDKYTDDPQSVVCSKPFQHCEGVSHCTDKVYAVALHSLYDIPADEFGAALLRRNVHVCYAAFHFSENLLLEDSYVSLDDIGAFFSREGDMLNFSFVAESTLNYTHSYSNVLKYVCKTYFPASSREVYMKEFLVTRVNTWFCKFSRLDTFVLYRGVYHRGVDKEQFYSAMEDAWHYKKTLAMMNSERILLEDSSSVNYWFPKMKDMVIVPLFDVSLQNEGKRLARKEVMVSKDFVYTVLNHIRTYQSKALTYANVLSFVESIRSRVIINGVTARSEWDVDKALLQSLSMTFFLQTKLAMLKDDLVVQKFQVHSKSLTEYVWDEITAAFHNCFPTIKERLINKKLITVSEKALEIKVPDLYVTFHDRLVKEYKSSVEMPVLDVKKSLEEAEVMYNALSEISILKDSDKFDVDVFSRMCNTLGVDPLVAAKVMVAVVSNESGLTLTFERPTEANVALALQPTITSKEEGSLKIVSSDVGESSIKEVVRKSEISMLGLTGNTVSDEFQRSTEIESLQQFHMVSTETIIRKQMHAMVYTGPLKVQQCKNYLDSLVASLSAAVSNLKKIIKDTAAIDLETKEKFGVYDVCLKKWLVKPLSKGHAWGVVMDSDYKCFVALLTYDGENIVCGETWRRVAVSSESLVYSDMGKIRAIRSVLKDGEPHISSAKVTLVDGVPGCGKTKEILSRVNFDEDLVLVPGKQAAEMIRRRANSSGLIVATKENVRTVDSFLMNYGRGPCQYKRLFLDEGLMLHPGCVNFLVGMSLCSEAFVYGDTQQIPYINRVATFPYPKHLSQLEVDAVETRRTTLRCPADITFFLNQKYEGQVMCTSSVTRSVSHEVIQGAAVMNPVSKPLKGKVITFTQSDKSLLLSRGYEDVHTVHEVQGETFEDVSLVRLTPTPVGIISKQSPHLLVSLSRHTRSIKYYTVVLDAVVSVLRDLECVSSYLLDMYKVDVSTQXQLQIESVYKGVNLFVAAPKTGDVSDMQYYYDKCLPGNSTILNEYDAVTMQIRENSLNVKDCVLDMSKSVPLPRESETTLKPVIRTAAEKPRKPGLLENLVAMIKRNFNSPELVGVVDIEDTASLVVDKFFDAYLIKEKKKPKNIPLLSRASLERWIEKQEKSTIGQLADFDFIDLPAVDQYRHMIKQQPKQRLDLSIQTEYPALQTIVYHSKKINALFGPVFSELTRQLLETIDSSRFMFYTRKTPTQIEEFFSDLDSNVPMDILELDISKYDKSQNEFHCAVEYEIWKRLGLDDFLAEVWKHGHRKTTLKDYTAGIKTCLWYQRKSGDVTTFIGNTIIIAACLSSMLPMERLIKGAFCGDDSILYFPKGTDFPDIQQGANLLWNFEAKLFRKRYGYFCGRYIIHHDRGCIVYYDPLKLISKLGAKHIKNREHLEEFRTSLCDVAGSLNNCAYYTHLNDAVGEVIKTAPLGSFVYRALVKYLCDKRLFQTLFLE.

The interval 52–466 (RSISEEQTLI…FLQTKLAMLK (415 aa)) is methyltransferase. In terms of domain architecture, Alphavirus-like MT spans 72 to 280 (TFYNTQNAVH…HSYSNVLKYV (209 aa)). A (+)RNA virus helicase ATP-binding domain is found at 803–964 (LVYSDMGKIR…QLEVDAVETR (162 aa)). Positions 831-1086 (TLVDGVPGCG…RHTRSIKYYT (256 aa)) are helicase. Residue 835–842 (GVPGCGKT) coordinates ATP. One can recognise a (+)RNA virus helicase C-terminal domain in the interval 965–1117 (RTTLRCPADI…DMYKVDVSTQ (153 aa)). One can recognise a RdRp catalytic domain in the interval 1380–1493 (MDILELDISK…YFPKGTDFPD (114 aa)).

It belongs to the ssRNA positive-strand viruses RNA-directed RNA polymerase family. In terms of assembly, heterodimer of a large and a small subunit.

It catalyses the reaction RNA(n) + a ribonucleoside 5'-triphosphate = RNA(n+1) + diphosphate. The enzyme catalyses ATP + H2O = ADP + phosphate + H(+). Functionally, is an RNA-dependent RNA polymerase active in viral RNA replication. Its function is as follows. Is a methyltransferase active in RNA capping and an RNA helicase. Methyltransferase displays a cytoplasmic capping enzyme activity. This function is necessary since all viral RNAs are synthesized in the cytoplasm, and host capping enzymes are restricted to the nucleus. Helicase region probably exhibits NTPase and RNA unwinding activities (Potential). It also acts as a suppressor of RNA-mediated gene silencing, also known as post-transcriptional gene silencing (PTGS), a mechanism of plant viral defense that limits the accumulation of viral RNAs. May mediate silencing suppression through either inhibition of HEN1-mediated siRNA or siRNA demethylation. This Pepper mild mottle virus (strain Spain) (PMMV-S) protein is Replicase large subunit.